The sequence spans 486 residues: Cobyric acid synthase (486 aa).

The region spanning 248 to 435 is the GATase cobBQ-type domain; sequence VLNVVVPVLP…LHGLFESPAA (188 aa). The active-site Nucleophile is Cys-329. Residue His-427 is part of the active site.

The protein belongs to the CobB/CobQ family. CobQ subfamily.

The protein operates within cofactor biosynthesis; adenosylcobalamin biosynthesis. Catalyzes amidations at positions B, D, E, and G on adenosylcobyrinic A,C-diamide. NH(2) groups are provided by glutamine, and one molecule of ATP is hydrogenolyzed for each amidation. This chain is Cobyric acid synthase, found in Pseudomonas syringae pv. syringae (strain B728a).